Here is a 214-residue protein sequence, read N- to C-terminus: Probable transaldolase (214 aa).

K83 serves as the catalytic Schiff-base intermediate with substrate.

Belongs to the transaldolase family. Type 3B subfamily.

The protein resides in the cytoplasm. The enzyme catalyses D-sedoheptulose 7-phosphate + D-glyceraldehyde 3-phosphate = D-erythrose 4-phosphate + beta-D-fructose 6-phosphate. It functions in the pathway carbohydrate degradation; pentose phosphate pathway; D-glyceraldehyde 3-phosphate and beta-D-fructose 6-phosphate from D-ribose 5-phosphate and D-xylulose 5-phosphate (non-oxidative stage): step 2/3. In terms of biological role, transaldolase is important for the balance of metabolites in the pentose-phosphate pathway. The sequence is that of Probable transaldolase from Alkaliphilus metalliredigens (strain QYMF).